A 98-amino-acid polypeptide reads, in one-letter code: Large ribosomal subunit protein bL28 (98 aa).

The protein belongs to the bacterial ribosomal protein bL28 family.

This chain is Large ribosomal subunit protein bL28, found in Rhizobium etli (strain ATCC 51251 / DSM 11541 / JCM 21823 / NBRC 15573 / CFN 42).